A 31-amino-acid polypeptide reads, in one-letter code: Cytochrome b6-f complex subunit 6 (31 aa).

A helical membrane pass occupies residues I4–G24.

It belongs to the PetL family. In terms of assembly, the 4 large subunits of the cytochrome b6-f complex are cytochrome b6, subunit IV (17 kDa polypeptide, PetD), cytochrome f and the Rieske protein, while the 4 small subunits are PetG, PetL, PetM and PetN. The complex functions as a dimer.

The protein localises to the plastid. The protein resides in the chloroplast thylakoid membrane. Component of the cytochrome b6-f complex, which mediates electron transfer between photosystem II (PSII) and photosystem I (PSI), cyclic electron flow around PSI, and state transitions. PetL is important for photoautotrophic growth as well as for electron transfer efficiency and stability of the cytochrome b6-f complex. This Citrus sinensis (Sweet orange) protein is Cytochrome b6-f complex subunit 6.